The primary structure comprises 548 residues: Membrane protein insertase YidC (548 aa).

Residues 6–26 (NLLVIALLFVSFMIWQAWEQD) form a helical membrane-spanning segment. The interval 28–55 (NPQPQAQQTTQTTTTAAGSAADQGVPAS) is disordered. The segment covering 30 to 50 (QPQAQQTTQTTTTAAGSAADQ) has biased composition (low complexity). Transmembrane regions (helical) follow at residues 350–370 (FVGN…GIMY), 420–440 (LGGC…YYML), 458–478 (LSAQ…MFFI), and 499–519 (PVIF…YYIV).

The protein belongs to the OXA1/ALB3/YidC family. Type 1 subfamily. Interacts with the Sec translocase complex via SecD. Specifically interacts with transmembrane segments of nascent integral membrane proteins during membrane integration.

Its subcellular location is the cell inner membrane. Functionally, required for the insertion and/or proper folding and/or complex formation of integral membrane proteins into the membrane. Involved in integration of membrane proteins that insert both dependently and independently of the Sec translocase complex, as well as at least some lipoproteins. Aids folding of multispanning membrane proteins. This chain is Membrane protein insertase YidC, found in Shigella dysenteriae serotype 1 (strain Sd197).